Consider the following 566-residue polypeptide: Amidophosphoribosyltransferase 1, chloroplastic (566 aa).

Residues methionine 1–leucine 13 show a composition bias toward low complexity. 2 disordered regions span residues methionine 1–proline 28 and valine 58–proline 87. A chloroplast-targeting transit peptide spans methionine 1–valine 58. Polar residues predominate over residues threonine 15 to glutamine 25. Over residues serine 59–serine 68 the composition is skewed to low complexity. Residues aspartate 70 to proline 87 show a composition bias toward basic and acidic residues. Cysteine 91 functions as the Nucleophile in the catalytic mechanism. The region spanning cysteine 91–aspartate 311 is the Glutamine amidotransferase type-2 domain. Residues cysteine 327, cysteine 473, cysteine 524, and cysteine 527 each contribute to the [4Fe-4S] cluster site.

In the C-terminal section; belongs to the purine/pyrimidine phosphoribosyltransferase family. It depends on [4Fe-4S] cluster as a cofactor. Requires Mg(2+) as cofactor. As to expression, expressed in flowers and roots. Also present in leaves, and, to a lower extent, in cotyledons.

The protein localises to the plastid. The protein resides in the chloroplast stroma. It catalyses the reaction 5-phospho-beta-D-ribosylamine + L-glutamate + diphosphate = 5-phospho-alpha-D-ribose 1-diphosphate + L-glutamine + H2O. It participates in purine metabolism; IMP biosynthesis via de novo pathway; N(1)-(5-phospho-D-ribosyl)glycinamide from 5-phospho-alpha-D-ribose 1-diphosphate: step 1/2. Its function is as follows. Catalyzes the first committed step of 'de novo' purine biosynthesis from glutamine. Involved in plastid biogenesis and cell division. The chain is Amidophosphoribosyltransferase 1, chloroplastic (ASE1) from Arabidopsis thaliana (Mouse-ear cress).